A 215-amino-acid chain; its full sequence is Peroxiredoxin (215 aa).

A Thioredoxin domain is found at 6–161 (PLIGEEFPRL…ILRAVRALQT (156 aa)). Cysteine 48 (cysteine sulfenic acid (-SOH) intermediate) is an active-site residue. Substrate is bound at residue arginine 124. Cysteine 205 and cysteine 211 are joined by a disulfide.

This sequence belongs to the peroxiredoxin family. Prx6 subfamily. In terms of assembly, homodecamer. Pentamer of dimers that assemble into a ring structure.

It localises to the cytoplasm. The enzyme catalyses a hydroperoxide + [thioredoxin]-dithiol = an alcohol + [thioredoxin]-disulfide + H2O. In terms of biological role, thiol-specific peroxidase that catalyzes the reduction of hydrogen peroxide and organic hydroperoxides to water and alcohols, respectively. Plays a role in cell protection against oxidative stress by detoxifying peroxides. The protein is Peroxiredoxin of Thermotoga petrophila (strain ATCC BAA-488 / DSM 13995 / JCM 10881 / RKU-1).